The following is a 613-amino-acid chain: MFNMNVDESASGALGSSAIPVHPTPASVRLFEILQGKYAYVQGQTIYANLRNPGVFSRQVFTHLFKRAISHCTYDDVLHDWNKFEACIQKRWPSDDSCASRFRESTFESWSTTMKLTVRDLLTTNIYRVLHSRSVLSYERYVDWICATGMVPAVKKPITQELHSKIKSLRDRCVCRELGHERTIRSIGTELYEATKEIIESLNSTFIPQFTEVTIEYLPRSDEYVAYYCGRRIRLHVLFPPAIFAGTVTFDSPVQRLYQNIFMCYRTLEHAKICQLLNTAPLKAIVGHGGRDMYKDILAHLEQNSQRKDPKKELLNLLVKLSENKTISGVTDVVEEFITDASNNLVDRNRLFGQPGETAAQGLKKKVSNTVVKCLTDQINEQFDQINGLEKERELYLKKIRSMESQLQASLGPGGNNPAASAPAAVAAEAASVDILTGSTASAIEKLFNSPSASLGARVSGHNESILNSFVSQYIPPSREMTKDLTELWESELFNTFKLTPVVDNQGQRLYVRYSSDTISILLGPFTYLVAELSPVELVTDVYATLGIVEIIDELYRSSRLAIYIEDLGRKYCPASATGGDHGIRQAPSARGDTEPDHAKSKPARDPPPGAGS.

The interval 577-613 (ATGGDHGIRQAPSARGDTEPDHAKSKPARDPPPGAGS) is disordered. Residues 592–605 (GDTEPDHAKSKPAR) are compositionally biased toward basic and acidic residues.

The protein belongs to the herpesviridae portal protein family. In terms of assembly, homododecamerizes. Interacts with terminase subunits TRM1 and TRM3.

It is found in the virion. The protein localises to the host nucleus. Its subcellular location is the host cytoplasm. In terms of biological role, forms a portal in the viral capsid through which viral DNA is translocated during DNA packaging. Assembles as a dodecamer at a single fivefold axe of the T=16 icosahedric capsid. Binds to the molecular motor that translocates the viral DNA, termed terminase. In Epstein-Barr virus (strain B95-8) (HHV-4), this protein is Portal protein.